The chain runs to 238 residues: Ribonuclease 3 (238 aa).

The 124-residue stretch at 17 to 140 (YATLEKALGY…LMAGVYLEAG (124 aa)) folds into the RNase III domain. E53 contributes to the Mg(2+) binding site. Residue D57 is part of the active site. Mg(2+)-binding residues include S126 and E129. The active site involves E129. Residues 167 to 236 (DYKTALQELT…AYQALQKLKE (70 aa)) enclose the DRBM domain.

It belongs to the ribonuclease III family. Homodimer. Mg(2+) serves as cofactor.

It is found in the cytoplasm. It carries out the reaction Endonucleolytic cleavage to 5'-phosphomonoester.. Digests double-stranded RNA. Involved in the processing of primary rRNA transcript to yield the immediate precursors to the large and small rRNAs (23S and 16S). Processes some mRNAs, and tRNAs when they are encoded in the rRNA operon. Processes pre-crRNA and tracrRNA of type II CRISPR loci if present in the organism. The polypeptide is Ribonuclease 3 (Helicobacter pylori (strain Shi470)).